Consider the following 113-residue polypeptide: MSASVLSVISRFLEEYLSATPQRLKLLDAYLLYILLTGALQFGYCLLVGTFPFNSFLSGFISCVGSFILAVCLRIQINPQNKADFQGISPERAFADFLFASTILHLVVMNFVG.

Serine 2 is modified (N-acetylserine). Residues 2 to 30 (SASVLSVISRFLEEYLSATPQRLKLLDAY) are Cytoplasmic-facing. Residues 31 to 51 (LLYILLTGALQFGYCLLVGTF) form a helical membrane-spanning segment. Proline 52 is a topological domain (lumenal). A helical membrane pass occupies residues 53-73 (FNSFLSGFISCVGSFILAVCL). Residues 74–92 (RIQINPQNKADFQGISPER) lie on the Cytoplasmic side of the membrane. A helical membrane pass occupies residues 93-113 (AFADFLFASTILHLVVMNFVG).

This sequence belongs to the DAD/OST2 family. As to quaternary structure, component of the oligosaccharyltransferase (OST) complex. OST exists in two different complex forms which contain common core subunits RPN1, RPN2, OST48, OST4, DAD1 and TMEM258, either STT3A or STT3B as catalytic subunits, and form-specific accessory subunits. STT3A complex assembly occurs through the formation of 3 subcomplexes. Subcomplex 1 contains RPN1 and TMEM258, subcomplex 2 contains the STT3A-specific subunits STT3A, DC2/OSTC, and KCP2 as well as the core subunit OST4, and subcomplex 3 contains RPN2, DAD1, and OST48. The STT3A complex can form stable complexes with the Sec61 complex or with both the Sec61 and TRAP complexes.

The protein resides in the endoplasmic reticulum membrane. It functions in the pathway protein modification; protein glycosylation. Its function is as follows. Subunit of the oligosaccharyl transferase (OST) complex that catalyzes the initial transfer of a defined glycan (Glc(3)Man(9)GlcNAc(2) in eukaryotes) from the lipid carrier dolichol-pyrophosphate to an asparagine residue within an Asn-X-Ser/Thr consensus motif in nascent polypeptide chains, the first step in protein N-glycosylation. N-glycosylation occurs cotranslationally and the complex associates with the Sec61 complex at the channel-forming translocon complex that mediates protein translocation across the endoplasmic reticulum (ER). All subunits are required for a maximal enzyme activity. The sequence is that of Dolichyl-diphosphooligosaccharide--protein glycosyltransferase subunit DAD1 from Bos taurus (Bovine).